The sequence spans 500 residues: Pyridine nucleotide-disulfide oxidoreductase domain-containing protein 1 (500 aa).

Methionine 1 carries the N-acetylmethionine modification.

Belongs to the class-I pyridine nucleotide-disulfide oxidoreductase family. PYROXD1 subfamily. Requires FAD as cofactor.

The protein localises to the nucleus. It localises to the cytoplasm. It is found in the myofibril. Its subcellular location is the sarcomere. Its function is as follows. Probable FAD-dependent oxidoreductase; involved in the cellular oxidative stress response. Required for normal sarcomere structure and muscle fiber integrity. The polypeptide is Pyridine nucleotide-disulfide oxidoreductase domain-containing protein 1 (PYROXD1) (Pongo abelii (Sumatran orangutan)).